The sequence spans 526 residues: MSINRISKNELLANYDTFLFDADGVLWTGDIPVPGAIEWINLLLEDPSKKVFVLTNNSTKTLEQYMKKIEKLGFGHLGRNNVISPAIVLADYLKSNADKFSGEYVYLIGTENLKATLENDGGVKCFGTGPDSIRDHTDGDFIHKVDMSIAPKAVVCSYDAHFSYPKIMKASNYLQDPSVEYLVTNQDYTFPGPVPGVVIPGSGATSAAVTAVTGRDPKVFGKPHKPMADFLLRRAHVDPKRTVMFGDRLDTDIMFGNANGQLSATPIQCQNESENSEPQKQGWISRLLKGQSMDPSSWQKQSHSSLLSNSELMYEFMTHNYRPGEQDAYLDAFGKYKNEMNQKNPSIELVGSWTCAYGRTRDQAIHLWRHNKGYEDVDSSISLHGKDSGIRAADNDVAKLCGRRKNLIVKSFSYWREPEQRPPNHVYDLRSYVLQPGTMIDWASAWAKGIQYRREANQDVGGFFAQVGQLYVVYHIWAYPSMSGRNDTRHATWAKPGWDATVANTVPLIKKMQSKILTPTKYSQLE.

It belongs to the NipSnap family.

This chain is Putative NipSnap protein K02D10.1, found in Caenorhabditis elegans.